The following is a 267-amino-acid chain: MKRNFDSVKRLVIKIGTSSLVLPSGKINLEKIDQLAFVISSLHNKGIEVVLVSSGAMGFGLNVLDLETRPAEVGKQQAVSSVGQVAMMSLYSQVFSHYQTKVSQLLLTRDVVEYPESLANAINAFESLFELGVVPIVNENDAVSVDEMDHATKFGDNDRLSAIVAKVVGADLLIMLSDIDGLFDKNPNVYEDATLRSYVPEITEEILASAGAAGSKFGTGGMMSKIKSAQMVFENQSQMVLMNGENPRDILRVLEGAKIGTLFKQED.

Position 14 (lysine 14) interacts with ATP. Positions 54, 141, and 157 each coordinate substrate. ATP contacts are provided by residues 177-178 (SD) and 219-225 (TGGMMSK).

Belongs to the glutamate 5-kinase family.

Its subcellular location is the cytoplasm. The catalysed reaction is L-glutamate + ATP = L-glutamyl 5-phosphate + ADP. It participates in amino-acid biosynthesis; L-proline biosynthesis; L-glutamate 5-semialdehyde from L-glutamate: step 1/2. In terms of biological role, catalyzes the transfer of a phosphate group to glutamate to form L-glutamate 5-phosphate. The chain is Glutamate 5-kinase from Streptococcus thermophilus (strain CNRZ 1066).